The primary structure comprises 143 residues: Small ribosomal subunit protein eS6 (143 aa).

This sequence belongs to the eukaryotic ribosomal protein eS6 family.

The polypeptide is Small ribosomal subunit protein eS6 (Methanoregula boonei (strain DSM 21154 / JCM 14090 / 6A8)).